Reading from the N-terminus, the 624-residue chain is Acidic juvenile hormone-suppressible protein 1 (624 aa).

The signal sequence occupies residues 1–18 (MARLVLCALALLVAGGLA). N-linked (GlcNAc...) asparagine glycosylation is found at Asn-75 and Asn-478.

It belongs to the hemocyanin family.

It localises to the secreted. The protein localises to the extracellular space. The sequence is that of Acidic juvenile hormone-suppressible protein 1 (AJSP-1) from Trichoplusia ni (Cabbage looper).